The primary structure comprises 289 residues: SAGA-associated factor 29kDa (289 aa).

A coiled-coil region spans residues 9–36; sequence AQQIQDRLKDIQQNIHNVDEERRRAENS. Residues 137–278 enclose the SGF29 C-terminal domain; that stretch reads GNYVAKVGDN…VIAYRPTKKG (142 aa). Histone H3K4me3 N-terminus binding regions lie at residues 179–181 and 225–228; these read DID and QTTC. Residues 249 to 251 form a histone H3K4me3 binding region; that stretch reads FED.

The protein belongs to the SGF29 family. As to quaternary structure, component of the Spt-Ada-Gcn5 acetyltransferase (SAGA) complex consisting of wda/Taf5L, Saf6, Taf9, Taf10b, Taf12, Ada1, Spt3, Spt7, Spt20, Sf3b3, Sf3b5, Nipped-A/Tra1, a histone acetyltransferase (HAT) module made up of Gcn5, Ada2b (Isoform B), Ada3 and Sgf29, and a deubiquitinase (DUB) module made up of not/nonstop, Sgf11, Atxn7 and e(y)2. Component of the Chiffon histone acetyltransferase (CHAT) complex consisting of Ada3, Sgf29, Gcn5, chif/chiffon and Ada2b (Isoform A).

Its subcellular location is the nucleus. Component of both the SAGA and CHAT histone acetyltransferase complexes, which both predominantly acetylate histone H3. In Drosophila melanogaster (Fruit fly), this protein is SAGA-associated factor 29kDa.